The primary structure comprises 245 residues: Tetraspanin-6 (245 aa).

The Cytoplasmic segment spans residues 1–19 (MASPSRRLQTKPVITCFKS). Residues 20 to 40 (VLLIYTFIFWITGVILLAVGI) traverse the membrane as a helical segment. Topologically, residues 41–59 (WGKVSLENYFSLLNEKATN) are extracellular. A helical membrane pass occupies residues 60–80 (VPFVLIATGTVIILLGTFGCF). Residues 81–93 (ATCRASAWMLKLY) are Cytoplasmic-facing. Residues 94–114 (AMFLTLVFLVELVAAIVGFVF) form a helical membrane-spanning segment. Topologically, residues 115–208 (RHEIKNSFKN…IKVMTIIESE (94 aa)) are extracellular. N-linked (GlcNAc...) asparagine glycosylation occurs at asparagine 134. Residues 209-229 (MGVVAGISFGVACFQLIGIFL) traverse the membrane as a helical segment. Residues 230–245 (AYCLSRAITNNQYEIV) lie on the Cytoplasmic side of the membrane.

The protein belongs to the tetraspanin (TM4SF) family.

The protein resides in the membrane. This Homo sapiens (Human) protein is Tetraspanin-6 (TSPAN6).